Here is a 236-residue protein sequence, read N- to C-terminus: Ascorbate-specific transmembrane electron transporter 1 (236 aa).

Residues 1-11 are Cytoplasmic-facing; it reads MGLGLGVRAAP. The helical transmembrane segment at 12-32 threads the bilayer; the sequence is FTYAAHALAVAAAAMVLVWSI. Residues 15 to 219 enclose the Cytochrome b561 domain; sequence AAHALAVAAA…FGASVVVAAI (205 aa). Residues 33–50 lie on the Extracellular side of the membrane; that stretch reads QFRGGLAIESTNKNLIFN. The helical transmembrane segment at 51–71 threads the bilayer; the sequence is VHPVLMLIGYVIIGGEAIMVY. A heme b-binding site is contributed by His52. 67–75 contacts L-ascorbate; that stretch reads AIMVYRVLP. At 72 to 84 the chain is on the cytoplasmic side; it reads RVLPTSNHDTTKL. A helical membrane pass occupies residues 85–105; it reads IHLILHGIALVLGAVGIYFAF. Heme b is bound by residues His86 and His120. At 106–122 the chain is on the extracellular side; it reads KNHNESGIANLYSLHSW. Residue 116 to 125 participates in monodehydro-L-ascorbate radical binding; it reads LYSLHSWIGI. Residues 123–143 form a helical membrane-spanning segment; sequence IGIGTITLYGIQWIIGFVTFF. At 144–153 the chain is on the cytoplasmic side; sequence FPGAAPNVKK. The helical transmembrane segment at 154–174 threads the bilayer; that stretch reads GVLPWHVLFGLFVYILALANA. Residue His159 participates in heme b binding. The Extracellular segment spans residues 175-201; it reads ELGFLEKLTFLESSGLDKYGTEAFLVN. A helical transmembrane segment spans residues 202-222; it reads FTALVVVLFGASVVVAAIAPV. The Cytoplasmic segment spans residues 223–236; the sequence is RLEEPQGYDPIPEN.

Heme b is required as a cofactor.

The protein localises to the membrane. With respect to regulation, inhibited by diethylpyrocarbonate. Functionally, two-heme-containing cytochrome. Catalyzes ascorbate-dependent trans-membrane electron transfer by utilizing a concerted H(+)/e(-) transfer mechanism. This Zea mays (Maize) protein is Ascorbate-specific transmembrane electron transporter 1 (ZCYB).